Here is a 247-residue protein sequence, read N- to C-terminus: 2,3-bisphosphoglycerate-dependent phosphoglycerate mutase (247 aa).

Residues 13 to 20 (RHGESDWN), 26 to 27 (TG), arginine 65, 92 to 95 (ERHY), lysine 103, 119 to 120 (RR), and 186 to 187 (GN) each bind substrate. Histidine 14 functions as the Tele-phosphohistidine intermediate in the catalytic mechanism. Glutamate 92 acts as the Proton donor/acceptor in catalysis.

This sequence belongs to the phosphoglycerate mutase family. BPG-dependent PGAM subfamily. In terms of assembly, homotetramer, dimer of dimers.

The enzyme catalyses (2R)-2-phosphoglycerate = (2R)-3-phosphoglycerate. It participates in carbohydrate degradation; glycolysis; pyruvate from D-glyceraldehyde 3-phosphate: step 3/5. Catalyzes the interconversion of 2-phosphoglycerate and 3-phosphoglycerate. This chain is 2,3-bisphosphoglycerate-dependent phosphoglycerate mutase, found in Mycobacterium leprae (strain Br4923).